The following is a 236-amino-acid chain: tRNA (guanine-N(1)-)-methyltransferase (236 aa).

S-adenosyl-L-methionine is bound by residues G116 and L136 to L141.

The protein belongs to the RNA methyltransferase TrmD family. As to quaternary structure, homodimer.

The protein resides in the cytoplasm. The enzyme catalyses guanosine(37) in tRNA + S-adenosyl-L-methionine = N(1)-methylguanosine(37) in tRNA + S-adenosyl-L-homocysteine + H(+). Specifically methylates guanosine-37 in various tRNAs. This chain is tRNA (guanine-N(1)-)-methyltransferase, found in Thiobacillus denitrificans (strain ATCC 25259 / T1).